We begin with the raw amino-acid sequence, 470 residues long: Ribosomal protein uS12 methylthiotransferase RimO (470 aa).

Positions 33-143 (NKIGFVSLGC…VLEHVHQYAP (111 aa)) constitute an MTTase N-terminal domain. Cys42, Cys78, Cys107, Cys175, Cys179, and Cys182 together coordinate [4Fe-4S] cluster. Positions 161–398 (LTPKHYAYLK…MLVQQEISAA (238 aa)) constitute a Radical SAM core domain. The TRAM domain maps to 401-467 (QKRIGSTMQV…EYDLWGSVLH (67 aa)).

This sequence belongs to the methylthiotransferase family. RimO subfamily. It depends on [4Fe-4S] cluster as a cofactor.

The protein localises to the cytoplasm. The enzyme catalyses L-aspartate(89)-[ribosomal protein uS12]-hydrogen + (sulfur carrier)-SH + AH2 + 2 S-adenosyl-L-methionine = 3-methylsulfanyl-L-aspartate(89)-[ribosomal protein uS12]-hydrogen + (sulfur carrier)-H + 5'-deoxyadenosine + L-methionine + A + S-adenosyl-L-homocysteine + 2 H(+). Catalyzes the methylthiolation of an aspartic acid residue of ribosomal protein uS12. The polypeptide is Ribosomal protein uS12 methylthiotransferase RimO (Vibrio cholerae serotype O1 (strain ATCC 39541 / Classical Ogawa 395 / O395)).